The chain runs to 343 residues: Versiconal hemiacetal acetate reductase (343 aa).

Tyr-59 acts as the Proton donor in catalysis. His-144 is a binding site for substrate. Residue 229–239 (SPVARGALARP) coordinates NADP(+).

The protein belongs to the aldo/keto reductase family. Aldo/keto reductase 2 subfamily.

It catalyses the reaction (2S)-versicolorone + NADP(+) = 1'-hydroxyversicolorone + NADPH + H(+). It carries out the reaction (3S)-versiconol acetate + NADP(+) = (2S,3S)-versiconal hemiacetal acetate + NADPH + H(+). The catalysed reaction is (S)-versiconol + NADP(+) = (2S-3S)-versiconal hemiacetal + NADPH + H(+). Catalyzes 3 reactions: from hydroxyversicolorone (HVN) to versicolorone (VONE), from versiconal hemiacetal acetate (VHA) to versiconol acetate (VOAc) and from versiconal (VHOH) to versiconol (VOH). Probably not an aflatoxin biosynthesis gene: may be involved in the vertical branching steps connecting the main pathway from HVN to VHOH with the side pathway from VONE to VOH. This is Versiconal hemiacetal acetate reductase (vrdA) from Aspergillus parasiticus.